Reading from the N-terminus, the 401-residue chain is Heat shock transcription factor, Y-linked (401 aa).

Residues 1–11 are compositionally biased toward polar residues; the sequence is MAHVSSETQDV. Residues 1–30 are disordered; it reads MAHVSSETQDVSPKDELTASEASTRSPLCE. Residues 76–194 mediate DNA binding; that stretch reads LSLNFPRKLW…PQLLVRVKRR (119 aa).

This sequence belongs to the HSF family. As to expression, testis-specific. Present in Sertoli cells and spermatogenic cells (at protein level).

It is found in the nucleus. The protein localises to the cytoplasm. This chain is Heat shock transcription factor, Y-linked (HSFY1), found in Homo sapiens (Human).